A 96-amino-acid chain; its full sequence is Non-specific lipid-transfer protein 2 (96 aa).

The signal sequence occupies residues 1–27 (MMRKLAVLVLAVAMVAACGGGVVGVAG). 4 disulfide bridges follow: cysteine 30-cysteine 62, cysteine 38-cysteine 52, cysteine 53-cysteine 88, and cysteine 64-cysteine 95.

Functionally, transfer lipids across membranes. May play a role in plant defense or in the biosynthesis of cuticle layers. This chain is Non-specific lipid-transfer protein 2 (LTP-2), found in Oryza sativa subsp. japonica (Rice).